Reading from the N-terminus, the 276-residue chain is Diaminopimelate epimerase (276 aa).

Residues Asn-13, Gln-46, and Asn-66 each contribute to the substrate site. Cys-75 serves as the catalytic Proton donor. Substrate contacts are provided by residues 76–77 (GN), Asn-159, Asn-192, and 210–211 (ER). Cys-219 acts as the Proton acceptor in catalysis. 220 to 221 (GT) provides a ligand contact to substrate.

It belongs to the diaminopimelate epimerase family. In terms of assembly, homodimer.

The protein localises to the cytoplasm. It catalyses the reaction (2S,6S)-2,6-diaminopimelate = meso-2,6-diaminopimelate. It functions in the pathway amino-acid biosynthesis; L-lysine biosynthesis via DAP pathway; DL-2,6-diaminopimelate from LL-2,6-diaminopimelate: step 1/1. Catalyzes the stereoinversion of LL-2,6-diaminopimelate (L,L-DAP) to meso-diaminopimelate (meso-DAP), a precursor of L-lysine and an essential component of the bacterial peptidoglycan. In Pseudomonas putida (strain GB-1), this protein is Diaminopimelate epimerase.